The primary structure comprises 513 residues: ATP synthase subunit alpha (513 aa).

169–176 (GDRQTGKT) is an ATP binding site.

This sequence belongs to the ATPase alpha/beta chains family. In terms of assembly, F-type ATPases have 2 components, CF(1) - the catalytic core - and CF(0) - the membrane proton channel. CF(1) has five subunits: alpha(3), beta(3), gamma(1), delta(1), epsilon(1). CF(0) has three main subunits: a(1), b(2) and c(9-12). The alpha and beta chains form an alternating ring which encloses part of the gamma chain. CF(1) is attached to CF(0) by a central stalk formed by the gamma and epsilon chains, while a peripheral stalk is formed by the delta and b chains.

The protein resides in the cell inner membrane. The catalysed reaction is ATP + H2O + 4 H(+)(in) = ADP + phosphate + 5 H(+)(out). Functionally, produces ATP from ADP in the presence of a proton gradient across the membrane. The alpha chain is a regulatory subunit. The polypeptide is ATP synthase subunit alpha (Histophilus somni (strain 2336) (Haemophilus somnus)).